The chain runs to 76 residues: UPF0248 protein MmarC5_1387 (76 aa).

This sequence belongs to the UPF0248 family.

The chain is UPF0248 protein MmarC5_1387 from Methanococcus maripaludis (strain C5 / ATCC BAA-1333).